The primary structure comprises 455 residues: MGGLKFHVLMYPWFATGHMTPFLFLANKLAEKGHTVTFLIPKKALKQLENLNLFPHNIVFRSVTVPHVDGLPVGTETVSEIPVTSADLLMSAMDLTRDQVEGVVRAVEPDLIFFDFAHWIPEVARDFGLKTVKYVVVSASTIASMLVPGGELGVPPPGYPSSKVLLRKQDAYTMKNLESTNTINVGPNLLERVTTSLMNSDVIAIRTAREIEGNFCDYIEKHCRKKVLLTGPVFPEPDKTRELEERWVKWLSGYEPDSVVFCALGSQVILEKDQFQELCLGMELTGSPFLVAVKPPRGSSTIQEALPEGFEERVKGRGVVWGEWVQQPLLLSHPSVGCFVSHCGFGSMWESLLSDCQIVLVPQLGDQVLNTRLLSDELKVSVEVAREETGWFSKESLFDAINSVMKRDSEIGNLVKKNHTKWRETLTSPGLVTGYVDNFIESLQDLVSGTNHVSK.

UDP-alpha-D-glucose is bound by residues serine 266, 325 to 327 (VQQ), 342 to 350 (HCGFGSMWE), and 364 to 367 (LGDQ).

It belongs to the UDP-glycosyltransferase family.

This is UDP-glycosyltransferase 79B2 (UGT79B2) from Arabidopsis thaliana (Mouse-ear cress).